The sequence spans 505 residues: 2,3-bisphosphoglycerate-independent phosphoglycerate mutase (505 aa).

Residues Asp-11 and Ser-61 each coordinate Mn(2+). The active-site Phosphoserine intermediate is Ser-61. Substrate contacts are provided by residues His-122, 152 to 153 (RD), Arg-183, Arg-189, 259 to 262 (RTDR), and Lys-332. Mn(2+) is bound by residues Asp-399, His-403, Asp-440, His-441, and His-458.

Belongs to the BPG-independent phosphoglycerate mutase family. In terms of assembly, monomer. Mn(2+) serves as cofactor.

The enzyme catalyses (2R)-2-phosphoglycerate = (2R)-3-phosphoglycerate. Its pathway is carbohydrate degradation; glycolysis; pyruvate from D-glyceraldehyde 3-phosphate: step 3/5. Functionally, catalyzes the interconversion of 2-phosphoglycerate and 3-phosphoglycerate. The chain is 2,3-bisphosphoglycerate-independent phosphoglycerate mutase from Flavobacterium johnsoniae (strain ATCC 17061 / DSM 2064 / JCM 8514 / BCRC 14874 / CCUG 350202 / NBRC 14942 / NCIMB 11054 / UW101) (Cytophaga johnsonae).